The chain runs to 279 residues: Zinc finger CCCH domain-containing protein 42 (279 aa).

The segment at 11–77 (SDHRSSSTPM…KAAVEPQEYP (67 aa)) is disordered. A compositionally biased stretch (low complexity) spans 16–39 (SSTPMATTTSSSASDPAAISPTPS). C3H1-type zinc fingers lie at residues 79–107 (RPGV…HPAK), 120–148 (RPGE…HPPD), and 186–214 (RPGT…HPNS).

In Oryza sativa subsp. japonica (Rice), this protein is Zinc finger CCCH domain-containing protein 42.